Consider the following 351-residue polypeptide: MAASSASTSAIQQRVWQGRIPLQIVLSPSECRIYDQSDPYIISIPRLSYLPFILPRLFSFFSSSLIDPDVQAHDGWFSFEGVPLKWHYPVGLLYDLYAGAEPITSKSLSSPGSEREHYVRGGTRENISESGAEGEKDDNHGHDHEFKRDALPWRLMVHFHDWPEQDLIRLDPEGKILHDAFINSVKEADCLRNGTAKRIMALSKEDSSGLWKSVEEHNLPAYHRIHNTLLLPTPPTPFRNIPIRIFLPAPPDSPSPSLKVIQSPIPPLIQPTASPSSSISSASRQMQPQVQTIGTALNSLLPSLFPSKRTPMLAKPVLHGAVVPMSAPVEEVVKCAGYADGWLGVVVSMVG.

Residues 106–143 form a disordered region; that stretch reads KSLSSPGSEREHYVRGGTRENISESGAEGEKDDNHGHD. Over residues 113–143 the composition is skewed to basic and acidic residues; that stretch reads SEREHYVRGGTRENISESGAEGEKDDNHGHD. Lys-186 is covalently cross-linked (Glycyl lysine isopeptide (Lys-Gly) (interchain with G-Cter in ATG12)).

This sequence belongs to the ATG5 family. In terms of assembly, conjugated with ATG12. In terms of processing, conjugated to ATG12; which is essential for autophagy.

The protein resides in the preautophagosomal structure membrane. Involved in cytoplasm to vacuole transport (Cvt) and autophagic vesicle formation. Autophagy is essential for maintenance of amino acid levels and protein synthesis under nitrogen starvation. Required for selective autophagic degradation of the nucleus (nucleophagy). Also required for mitophagy, which eliminates defective or superfluous mitochondria in order to fulfill cellular energy requirements and prevent excess ROS production. Conjugation with ATG12, through a ubiquitin-like conjugating system involving ATG7 as an E1-like activating enzyme and ATG10 as an E2-like conjugating enzyme, is essential for its function. The ATG12-ATG5 conjugate acts as an E3-like enzyme which is required for lipidation of ATG8 and ATG8 association to the vesicle membranes. This chain is Autophagy protein 5 (ATG5), found in Coccidioides immitis (strain RS) (Valley fever fungus).